The following is a 157-amino-acid chain: Transcription elongation factor GreA (157 aa).

Residues 1-60 (MEKVPMTSAGFAALGEELKKRQSEDRPRIIEHIAEARSHGDLSENAEYHAAKEEQSHNEG) are disordered. The segment covering 16 to 60 (EELKKRQSEDRPRIIEHIAEARSHGDLSENAEYHAAKEEQSHNEG) has biased composition (basic and acidic residues). Residues 46–73 (AEYHAAKEEQSHNEGRIAELEDKLARAD) are a coiled coil.

The protein belongs to the GreA/GreB family.

Necessary for efficient RNA polymerase transcription elongation past template-encoded arresting sites. The arresting sites in DNA have the property of trapping a certain fraction of elongating RNA polymerases that pass through, resulting in locked ternary complexes. Cleavage of the nascent transcript by cleavage factors such as GreA or GreB allows the resumption of elongation from the new 3'terminus. GreA releases sequences of 2 to 3 nucleotides. In Bradyrhizobium diazoefficiens (strain JCM 10833 / BCRC 13528 / IAM 13628 / NBRC 14792 / USDA 110), this protein is Transcription elongation factor GreA.